The sequence spans 318 residues: Oxygen-evolving enhancer protein 1, chloroplastic (318 aa).

A signal peptide spans 1 to 18; the sequence is MKAVIAVFITLMLTAVVA. Residues 45–65 form a helical membrane-spanning segment; it reads AAAAALAALTTLSVISPSFAI.

The protein belongs to the PsbO family.

The protein localises to the plastid. The protein resides in the chloroplast thylakoid membrane. Functionally, stabilizes the manganese cluster which is the primary site of water splitting. The chain is Oxygen-evolving enhancer protein 1, chloroplastic from Chattonella marina var. antiqua (Red tide flagellate).